Consider the following 177-residue polypeptide: Large ribosomal subunit protein uL6 (177 aa).

A disordered region spans residues 151 to 177 (YRPPEPYKGKGIRYSDEHVVRKEAKKK). Residues 155-177 (EPYKGKGIRYSDEHVVRKEAKKK) are compositionally biased toward basic and acidic residues.

This sequence belongs to the universal ribosomal protein uL6 family. As to quaternary structure, part of the 50S ribosomal subunit.

Functionally, this protein binds to the 23S rRNA, and is important in its secondary structure. It is located near the subunit interface in the base of the L7/L12 stalk, and near the tRNA binding site of the peptidyltransferase center. The sequence is that of Large ribosomal subunit protein uL6 from Psychrobacter sp. (strain PRwf-1).